The primary structure comprises 479 residues: MSRMNTIYAVIDLGSWYIRGMVARKMEDGRVSPISFYEEPANNCIRHGCVHNIDEAAAIIRRIVNQLNENLEDNTHITSLYVGVGGQSIASQEFIVRKAMVPEGEVIRTEHIESLWAEMRGASFPDKEVLDVTDPLFYVDGKQEIQAKGVFCHELEARFQLITARRSVKQNIRIAIEERLGLRLTGILVTPLCEAQVLLSDDELTLGCCYVNIGAGCTSVSIYKNRLLAMLRVLPMGGYNVTRDLTSLRLTEQEAENMKLNHVSMINDNKSNGSFRMTFADKFSEREFRSSEVNRLAKARMDEITANYLNILRLSGLLEDIGAGIILNGGGTKINNYMAAMKKILGEVTPAKIRMDRIDTDNAISFIEEHISTIGLAYKATQPCTDYITTNLGELVSQIETKEEIPANDTVQDLFAQGRQTERKENEQRDNTDRQREDTPKQTVKKKEKTGPSFGDKLKGAFIKFGSLFDEDTNQDNNR.

Residues 417–458 (QGRQTERKENEQRDNTDRQREDTPKQTVKKKEKTGPSFGDKL) are disordered. A compositionally biased stretch (basic and acidic residues) spans 420–440 (QTERKENEQRDNTDRQREDTP).

It belongs to the FtsA/MreB family. Self-interacts. Interacts with FtsZ.

It is found in the cell inner membrane. Its function is as follows. Cell division protein that is involved in the assembly of the Z ring. May serve as a membrane anchor for the Z ring. This Porphyromonas gingivalis (strain ATCC BAA-308 / W83) protein is Cell division protein FtsA.